The sequence spans 379 residues: MATAGKVIKCKAAVAWEAGKPLSIEEVEVAPPQAMEVRVKILYTALCHTDVYFWEAKGQTPVFPRILGHEAGGIVESVGEGVTELAPGDHVLPVFTGECKECDHCKSEESNMCDLLRINVDRGVMIGDGKSRFTIKGKPIFHFVGTSTFSEYTVIHVGCLAKINPEAPLDKVCILSCGFSTGFGATVNVAKPKKGQTVAIFGLGAVGLAAMEGARLSGASRIIGVDLNPAKFEQAKKFGCTDFVNPKDHSKPVHEVLIEMTNGGLDRAVECTGNINAMISCFECVHDGWGVAVLVGVPTKDDVFKTHPMNFLNEKTLKGTFFGNYKPRTDLPNVVELYMKKELELEKFITHSVPFSEINTAFDLMLKGESLRCVMRMDE.

Residues Cys-47, Thr-49, His-69, Cys-99, Cys-102, Cys-105, Cys-113, and Cys-177 each contribute to the Zn(2+) site. Residues Thr-49 and His-69 each coordinate an alcohol. An NAD(+)-binding site is contributed by Thr-49. NAD(+) contacts are provided by residues 202 to 207, Asp-226, Lys-231, Thr-272, Val-295, 295 to 297, Phe-322, and Arg-372; these read GLGAVG and VGV.

This sequence belongs to the zinc-containing alcohol dehydrogenase family. In terms of assembly, homodimer. The cofactor is Zn(2+).

Its subcellular location is the cytoplasm. It catalyses the reaction a primary alcohol + NAD(+) = an aldehyde + NADH + H(+). The enzyme catalyses a secondary alcohol + NAD(+) = a ketone + NADH + H(+). The chain is Alcohol dehydrogenase 2 (ADH2) from Oryza sativa subsp. indica (Rice).